The chain runs to 505 residues: Maturase K (505 aa).

It belongs to the intron maturase 2 family. MatK subfamily.

It localises to the plastid. The protein localises to the chloroplast. In terms of biological role, usually encoded in the trnK tRNA gene intron. Probably assists in splicing its own and other chloroplast group II introns. This is Maturase K from Ulmus parvifolia (Chinese elm).